We begin with the raw amino-acid sequence, 278 residues long: Small ribosomal subunit protein uS3 (278 aa).

The KH type-2 domain occupies Val-39–Arg-107. Residues Val-217 to Ser-278 form a disordered region. Residues Pro-230–Gly-239 are compositionally biased toward basic and acidic residues.

It belongs to the universal ribosomal protein uS3 family. Part of the 30S ribosomal subunit. Forms a tight complex with proteins S10 and S14.

Functionally, binds the lower part of the 30S subunit head. Binds mRNA in the 70S ribosome, positioning it for translation. This chain is Small ribosomal subunit protein uS3, found in Aromatoleum aromaticum (strain DSM 19018 / LMG 30748 / EbN1) (Azoarcus sp. (strain EbN1)).